Here is a 335-residue protein sequence, read N- to C-terminus: L-threo-3-deoxy-hexylosonate aldolase (335 aa).

Substrate is bound at residue 50 to 51 (SN). Lys-175 (schiff-base intermediate with substrate) is an active-site residue.

It belongs to the DapA family.

It carries out the reaction 2-dehydro-3-deoxy-L-galactonate = L-glyceraldehyde + pyruvate. It participates in carbohydrate acid metabolism. Its function is as follows. Mediates the conversion of 2-dehydro-3-deoxy-L-galactonate to pyruvate and L-glyceraldehyde in D-galacturonate catabolic process. The sequence is that of L-threo-3-deoxy-hexylosonate aldolase (gaaC) from Aspergillus niger.